A 488-amino-acid chain; its full sequence is Bifunctional protein HldE (488 aa).

Residues 1-332 (MRESFLDTIQ…QELQSQQSAA (332 aa)) form a ribokinase region. 208–211 (NKRE) is an ATP binding site. The active site involves aspartate 277. A cytidylyltransferase region spans residues 359-488 (FTNGCFDLLH…TSNIIRKLAS (130 aa)).

The protein in the N-terminal section; belongs to the carbohydrate kinase PfkB family. It in the C-terminal section; belongs to the cytidylyltransferase family. As to quaternary structure, homodimer.

The catalysed reaction is D-glycero-beta-D-manno-heptose 7-phosphate + ATP = D-glycero-beta-D-manno-heptose 1,7-bisphosphate + ADP + H(+). It catalyses the reaction D-glycero-beta-D-manno-heptose 1-phosphate + ATP + H(+) = ADP-D-glycero-beta-D-manno-heptose + diphosphate. The protein operates within nucleotide-sugar biosynthesis; ADP-L-glycero-beta-D-manno-heptose biosynthesis; ADP-L-glycero-beta-D-manno-heptose from D-glycero-beta-D-manno-heptose 7-phosphate: step 1/4. Its pathway is nucleotide-sugar biosynthesis; ADP-L-glycero-beta-D-manno-heptose biosynthesis; ADP-L-glycero-beta-D-manno-heptose from D-glycero-beta-D-manno-heptose 7-phosphate: step 3/4. Catalyzes the phosphorylation of D-glycero-D-manno-heptose 7-phosphate at the C-1 position to selectively form D-glycero-beta-D-manno-heptose-1,7-bisphosphate. In terms of biological role, catalyzes the ADP transfer from ATP to D-glycero-beta-D-manno-heptose 1-phosphate, yielding ADP-D-glycero-beta-D-manno-heptose. The chain is Bifunctional protein HldE from Methylobacillus flagellatus (strain ATCC 51484 / DSM 6875 / VKM B-1610 / KT).